Reading from the N-terminus, the 301-residue chain is t-SNARE affecting a late Golgi compartment protein 2 (301 aa).

The Cytoplasmic portion of the chain corresponds to 1–279 (MAYRDRTGLY…SHQKNTGRLR (279 aa)). The stretch at 92–120 (SDKTEQENEIQRLTIQITQDFQRCQKLLQ) forms a coiled coil. The t-SNARE coiled-coil homology domain occupies 206–268 (DEQAIRHERA…KSAEKELIKA (63 aa)). Residues 280-300 (FICFLILLIVALIVILAIKLL) form a helical; Anchor for type IV membrane protein membrane-spanning segment. A topological domain (vesicular) is located at residue Arg-301.

Belongs to the syntaxin family.

It localises to the golgi apparatus. The protein localises to the trans-Golgi network membrane. It is found in the endosome membrane. T-SNARE that functions in transport from the endosome to the late Golgi and on the endocytic pathway. This chain is t-SNARE affecting a late Golgi compartment protein 2 (tlg2), found in Schizosaccharomyces pombe (strain 972 / ATCC 24843) (Fission yeast).